A 124-amino-acid chain; its full sequence is Small ribosomal subunit protein uS12 (124 aa).

Belongs to the universal ribosomal protein uS12 family. In terms of assembly, part of the 30S ribosomal subunit. Contacts proteins S8 and S17. May interact with IF1 in the 30S initiation complex.

With S4 and S5 plays an important role in translational accuracy. In terms of biological role, interacts with and stabilizes bases of the 16S rRNA that are involved in tRNA selection in the A site and with the mRNA backbone. Located at the interface of the 30S and 50S subunits, it traverses the body of the 30S subunit contacting proteins on the other side and probably holding the rRNA structure together. The combined cluster of proteins S8, S12 and S17 appears to hold together the shoulder and platform of the 30S subunit. This Photorhabdus laumondii subsp. laumondii (strain DSM 15139 / CIP 105565 / TT01) (Photorhabdus luminescens subsp. laumondii) protein is Small ribosomal subunit protein uS12.